A 334-amino-acid polypeptide reads, in one-letter code: Holliday junction branch migration complex subunit RuvB (334 aa).

The interval 4–184 (ADRLVSAGVI…FGIVQRLEFY (181 aa)) is large ATPase domain (RuvB-L). ATP contacts are provided by residues Ile23, Arg24, Gly65, Lys68, Thr69, Thr70, 131 to 133 (EDY), Arg174, Tyr184, and Arg221. Thr69 provides a ligand contact to Mg(2+). Residues 185–255 (RVEDLQHIVG…VASRALDMLS (71 aa)) form a small ATPAse domain (RuvB-S) region. The interval 258–334 (SEGFDYMDRK…YKHFGITREG (77 aa)) is head domain (RuvB-H). DNA contacts are provided by Arg294, Arg313, and Arg318.

Belongs to the RuvB family. Homohexamer. Forms an RuvA(8)-RuvB(12)-Holliday junction (HJ) complex. HJ DNA is sandwiched between 2 RuvA tetramers; dsDNA enters through RuvA and exits via RuvB. An RuvB hexamer assembles on each DNA strand where it exits the tetramer. Each RuvB hexamer is contacted by two RuvA subunits (via domain III) on 2 adjacent RuvB subunits; this complex drives branch migration. In the full resolvosome a probable DNA-RuvA(4)-RuvB(12)-RuvC(2) complex forms which resolves the HJ.

The protein resides in the cytoplasm. It catalyses the reaction ATP + H2O = ADP + phosphate + H(+). Functionally, the RuvA-RuvB-RuvC complex processes Holliday junction (HJ) DNA during genetic recombination and DNA repair, while the RuvA-RuvB complex plays an important role in the rescue of blocked DNA replication forks via replication fork reversal (RFR). RuvA specifically binds to HJ cruciform DNA, conferring on it an open structure. The RuvB hexamer acts as an ATP-dependent pump, pulling dsDNA into and through the RuvAB complex. RuvB forms 2 homohexamers on either side of HJ DNA bound by 1 or 2 RuvA tetramers; 4 subunits per hexamer contact DNA at a time. Coordinated motions by a converter formed by DNA-disengaged RuvB subunits stimulates ATP hydrolysis and nucleotide exchange. Immobilization of the converter enables RuvB to convert the ATP-contained energy into a lever motion, pulling 2 nucleotides of DNA out of the RuvA tetramer per ATP hydrolyzed, thus driving DNA branch migration. The RuvB motors rotate together with the DNA substrate, which together with the progressing nucleotide cycle form the mechanistic basis for DNA recombination by continuous HJ branch migration. Branch migration allows RuvC to scan DNA until it finds its consensus sequence, where it cleaves and resolves cruciform DNA. This is Holliday junction branch migration complex subunit RuvB from Erwinia tasmaniensis (strain DSM 17950 / CFBP 7177 / CIP 109463 / NCPPB 4357 / Et1/99).